The following is a 157-amino-acid chain: Probable succinate transporter subunit YjjB (157 aa).

A run of 4 helical transmembrane segments spans residues L8–F28, M50–V70, V87–I107, and F129–W149.

It belongs to the ThrE exporter (TC 2.A.79) family. The transporter is composed of YjjB and YjjP.

It localises to the cell inner membrane. Its function is as follows. Involved in succinate export with YjjP. Both proteins are required for export. In Shigella flexneri serotype 5b (strain 8401), this protein is Probable succinate transporter subunit YjjB.